Here is a 107-residue protein sequence, read N- to C-terminus: Nucleoid-associated protein Rru_A3472 (107 aa).

Belongs to the YbaB/EbfC family. Homodimer.

Its subcellular location is the cytoplasm. The protein localises to the nucleoid. Functionally, binds to DNA and alters its conformation. May be involved in regulation of gene expression, nucleoid organization and DNA protection. The protein is Nucleoid-associated protein Rru_A3472 of Rhodospirillum rubrum (strain ATCC 11170 / ATH 1.1.1 / DSM 467 / LMG 4362 / NCIMB 8255 / S1).